A 418-amino-acid polypeptide reads, in one-letter code: MVDHKRIPKQVIVGVSGGIAAYKACTVVRQLTEASHRVRVIPTESALRFVGAATFEALSGEPVCTDVFADVPAVPHVHLGQQADLVVVAPATADLLARAAAGRADDLLTATLLTARCPVLFAPAMHTEMWLHPATVDNVATLRRRGAVVLEPATGRLTGADSGAGRLPEAEEITTLAQLLLERHDALPYDLAGRKLLVTAGGTREPIDPVRFIGNRSSGKQGYAVARVAAQRGADVTLIAGHTAGLVDPAGVEVVHVSSAQQLADAVSKHAPTADVLVMAAAVADFRPAQVATAKIKKGVEGPPTIELLRNDDVLAGVVRARAHGQLPNMRAIVGFAAETGDANGDVLFHARAKLRRKGCDLLVVNAVGEGRAFEVDSNDGWLLASDGTESALQHGSKTLMASRIVDAIVTFLAGCSS.

The tract at residues Met1–Lys195 is phosphopantothenoylcysteine decarboxylase. The interval Leu196 to Ser418 is phosphopantothenate--cysteine ligase. 5 residues coordinate CTP: Asp285, Lys295, Phe336, Lys354, and Lys358.

In the N-terminal section; belongs to the HFCD (homo-oligomeric flavin containing Cys decarboxylase) superfamily. This sequence in the C-terminal section; belongs to the PPC synthetase family. It depends on Mg(2+) as a cofactor. FMN serves as cofactor.

The enzyme catalyses N-[(R)-4-phosphopantothenoyl]-L-cysteine + H(+) = (R)-4'-phosphopantetheine + CO2. The catalysed reaction is (R)-4'-phosphopantothenate + L-cysteine + CTP = N-[(R)-4-phosphopantothenoyl]-L-cysteine + CMP + diphosphate + H(+). Its pathway is cofactor biosynthesis; coenzyme A biosynthesis; CoA from (R)-pantothenate: step 2/5. It participates in cofactor biosynthesis; coenzyme A biosynthesis; CoA from (R)-pantothenate: step 3/5. In terms of biological role, catalyzes two sequential steps in the biosynthesis of coenzyme A. In the first step cysteine is conjugated to 4'-phosphopantothenate to form 4-phosphopantothenoylcysteine. In the second step the latter compound is decarboxylated to form 4'-phosphopantotheine. This chain is Coenzyme A biosynthesis bifunctional protein CoaBC, found in Mycobacterium bovis (strain ATCC BAA-935 / AF2122/97).